We begin with the raw amino-acid sequence, 318 residues long: Protein-methionine-sulfoxide reductase catalytic subunit MsrP (318 aa).

A signal peptide (tat-type signal) is located at residues 1–40; that stretch reads MNRFTRYDVTPEVIFNQRRQIIKAMGLGAAALSLPNIGFA. Residues N72, 75–76, C130, T165, N217, R222, and 233–235 contribute to the Mo-molybdopterin site; these read YE and SIK.

It belongs to the MsrP family. Heterodimer of a catalytic subunit (MsrP) and a heme-binding subunit (MsrQ). Mo-molybdopterin serves as cofactor. Predicted to be exported by the Tat system. The position of the signal peptide cleavage has not been experimentally proven.

The protein resides in the periplasm. The enzyme catalyses L-methionyl-[protein] + a quinone + H2O = L-methionyl-(S)-S-oxide-[protein] + a quinol. The catalysed reaction is L-methionyl-[protein] + a quinone + H2O = L-methionyl-(R)-S-oxide-[protein] + a quinol. Part of the MsrPQ system that repairs oxidized periplasmic proteins containing methionine sulfoxide residues (Met-O), using respiratory chain electrons. Thus protects these proteins from oxidative-stress damage caused by reactive species of oxygen and chlorine generated by the host defense mechanisms. MsrPQ is essential for the maintenance of envelope integrity under bleach stress, rescuing a wide series of structurally unrelated periplasmic proteins from methionine oxidation. The catalytic subunit MsrP is non-stereospecific, being able to reduce both (R-) and (S-) diastereoisomers of methionine sulfoxide. The chain is Protein-methionine-sulfoxide reductase catalytic subunit MsrP from Actinobacillus pleuropneumoniae serotype 3 (strain JL03).